The primary structure comprises 589 residues: DNA mismatch repair protein MutL (589 aa).

Disordered stretches follow at residues 330–355 and 374–394; these read LQRR…SHRE and RIYE…SEPT. Over residues 331-341 the composition is skewed to basic and acidic residues; sequence QRREAPQRPEP. Over residues 381 to 390 the composition is skewed to pro residues; that stretch reads PYRPPEPPAA.

The protein belongs to the DNA mismatch repair MutL/HexB family.

In terms of biological role, this protein is involved in the repair of mismatches in DNA. It is required for dam-dependent methyl-directed DNA mismatch repair. May act as a 'molecular matchmaker', a protein that promotes the formation of a stable complex between two or more DNA-binding proteins in an ATP-dependent manner without itself being part of a final effector complex. In Trichlorobacter lovleyi (strain ATCC BAA-1151 / DSM 17278 / SZ) (Geobacter lovleyi), this protein is DNA mismatch repair protein MutL.